Reading from the N-terminus, the 326-residue chain is Tetraacyldisaccharide 4'-kinase (326 aa).

55–62 provides a ligand contact to ATP; the sequence is TAGGNGKT.

The protein belongs to the LpxK family.

It catalyses the reaction a lipid A disaccharide + ATP = a lipid IVA + ADP + H(+). The protein operates within glycolipid biosynthesis; lipid IV(A) biosynthesis; lipid IV(A) from (3R)-3-hydroxytetradecanoyl-[acyl-carrier-protein] and UDP-N-acetyl-alpha-D-glucosamine: step 6/6. Transfers the gamma-phosphate of ATP to the 4'-position of a tetraacyldisaccharide 1-phosphate intermediate (termed DS-1-P) to form tetraacyldisaccharide 1,4'-bis-phosphate (lipid IVA). The protein is Tetraacyldisaccharide 4'-kinase of Klebsiella pneumoniae subsp. pneumoniae (strain ATCC 700721 / MGH 78578).